Consider the following 680-residue polypeptide: MLTHKTCQARKKMQVSFVIRDAEEKQHRNGVNALQLDANNGKLYSAGRDAIIRVWNTRTDSSEKYIQSMEHHNDWVNDIVLCCNGRNLISASCDTTVKVWNAQKGFCMSTLRTHRDYVQALAYAKDREQVASAGLDKAIFLWDVNTLTALTASNNTVTTSSLTGSKDSIYSLAMNPSGTVIVSGSTENILRIWDPRTCMRIMKLRGHTENVRCLVVSPDGNQVVSGSSDGTIKVWNLGQQRCVQTIHVHKEGVWSLLMSENFQYIISGSRDRNIIVTEMRNPSNKTLVCEEQAPVLSLGYNIDKTGVWATTWNSDIRCWKLPMYDRCTLNSSGGMDAQWTQGGTEVACIKGGAAIKECAVLNDKRYIITKDSQDQVVVYDVLRVVKKEQLGAVDYEAEVKKRNKQVYIPNWFTVDLKTGMPTIVLGQEEVDCFSAWVSIEAGLPECVDPTTEIKINYGKLLLEALLEYWTPPHSIPPNEMEPDMHGNGYFQVPKHTPVIFSEVGGRTVCRLLVRDAAGDSESTLLHETAPQWVTDVVIEKNIPKFLKIPFFLQPHPQMTKPERTKKDRLVANEFIQCRKVCEHVLEKVLNAETTPSGGNANNSLQNSQSDANSEGSQLPAEERIELWCNDVVVDPNMDLRTVRHFIWKQSTDLTFQYKTKQNFNYDGSIGDSLERVTRKY.

8 WD repeats span residues Gln26–Tyr65, His71–Thr110, Thr113–Ala152, Gly164–Lys203, Gly206–Thr245, Val248–Leu287, Glu290–Leu329, and Lys350–Gln389. The disordered stretch occupies residues Glu592–Ser616.

It belongs to the WD repeat WDR48 family. As to quaternary structure, catalytic component of the Usp12-46 deubiquitylase complex consisting of Usp12-46, Wdr20 and Uaf1; regulatory subunit that, together wtih Wdr20, stabilizes Usp12-46. The Usp12-46 deubiquitylase complex associates with arr/arrow; the interaction leads to deubiquitination and stabilization of arr/arrow.

Regulatory component of the Usp12-46 deubiquitylase complex. activates deubiquitination by increasing the catalytic turnover without increasing the affinity of deubiquitinating enzymes for the substrate. The complex deubiquitylates the wg/wingless-signaling receptor arr/arrow, which stabilizes the receptor and increases its concentration at the cell surface; this enhances the sensitivity of cells to wg/wingless-signal stimulation. This increases the amplitude and spatial range of the signaling response to the wg/wingless morphogen gradient, facilitating the precise concentration-dependent regulation of its target genes. Together with Wdr20 and Usp12-46 required for wg/wingless-mediated signaling in the wing imaginal disc and for wg/wingless-dependent regulation of intestinal stem cell proliferation. In Drosophila sechellia (Fruit fly), this protein is WD repeat-containing protein 48 homolog.